A 370-amino-acid chain; its full sequence is 2-Hydroxyacid oxidase 1 (370 aa).

In terms of domain architecture, FMN hydroxy acid dehydrogenase spans 1-365; sequence MLPRLVCISD…DKTLVRKNPL (365 aa). Glyoxylate is bound at residue Tyr-26. FMN is bound by residues 79-81, Ser-108, and Gln-130; that span reads ATA. Tyr-132 is a glyoxylate binding site. Residue Thr-158 participates in FMN binding. Residue Arg-167 participates in glyoxylate binding. Residue Lys-184 is modified to N6-succinyllysine. Ser-194 and Ser-230 each carry phosphoserine. FMN is bound by residues Lys-236 and Ser-258. 2 residues coordinate glyoxylate: His-260 and Arg-263. His-260 acts as the Proton acceptor in catalysis. FMN is bound by residues 291-295 and 314-315; these read DGGVR and GR. The short motif at 368 to 370 is the Microbody targeting signal element; the sequence is SKI.

It belongs to the FMN-dependent alpha-hydroxy acid dehydrogenase family. In terms of assembly, homotetramer. Requires FMN as cofactor. Liver.

It localises to the peroxisome matrix. The catalysed reaction is a (2S)-2-hydroxycarboxylate + O2 = a 2-oxocarboxylate + H2O2. The enzyme catalyses glycolate + O2 = glyoxylate + H2O2. It carries out the reaction glyoxylate + O2 + H2O = oxalate + H2O2 + H(+). It catalyses the reaction 2-hydroxyhexadecanoate + O2 = 2-oxohexadecanoate + H2O2. The catalysed reaction is 2-hydroxyoctanoate + O2 = 2-oxooctanoate + H2O2. Its pathway is amino-acid biosynthesis; glycine biosynthesis. Broad substrate specificity (S)-2-hydroxy-acid oxidase that preferentially oxidizes glycolate. The glyoxylate produced by the oxidation of glycolate can then be utilized by alanine-glyoxylate aminotransferase for the peroxisomal synthesis of glycine; this pathway appears to be an important step for the detoxification of glyoxylate which, if allowed to accumulate, may be metabolized to oxalate with formation of kidney stones. Can also catalyze the oxidation glyoxylate, and long chain hydroxyacids such as 2-hydroxyhexadecanoate and 2-hydroxyoctanoate. Active in vitro with the artificial electron acceptor 2,6-dichlorophenolindophenol (DCIP), but O2 is believed to be the physiological electron acceptor, leading to the production of H2O2. This Mus musculus (Mouse) protein is 2-Hydroxyacid oxidase 1.